The sequence spans 556 residues: CDP-diacylglycerol--glycerol-3-phosphate 3-phosphatidyltransferase, mitochondrial (556 aa).

The transit peptide at 1 to 28 (MAVAAAAAAGPVFWRRLLGLLPGRPGLA) directs the protein to the mitochondrion. Serine 49 carries the phosphoserine modification. 124–131 (ASLYLGTG) contributes to the ATP binding site. PLD phosphodiesterase domains follow at residues 215–241 (TIGL…SDSY) and 460–493 (RGWT…GYRS). Residues histidine 220, lysine 222, and aspartate 227 contribute to the active site.

It belongs to the CDP-alcohol phosphatidyltransferase class-II family.

It is found in the mitochondrion. The enzyme catalyses a CDP-1,2-diacyl-sn-glycerol + sn-glycerol 3-phosphate = a 1,2-diacyl-sn-glycero-3-phospho-(1'-sn-glycero-3'-phosphate) + CMP + H(+). Its pathway is phospholipid metabolism; phosphatidylglycerol biosynthesis; phosphatidylglycerol from CDP-diacylglycerol: step 1/2. Activated by calcium and magnesium and inhibited by other bivalent cations. Functions in the biosynthesis of the anionic phospholipids phosphatidylglycerol and cardiolipin. This Homo sapiens (Human) protein is CDP-diacylglycerol--glycerol-3-phosphate 3-phosphatidyltransferase, mitochondrial (PGS1).